The primary structure comprises 488 residues: Prostaglandin E2 receptor EP4 subtype (488 aa).

Residues 1–19 are Extracellular-facing; it reads MSTPVANASASSMPELLNN. N7 carries N-linked (GlcNAc...) asparagine glycosylation. The chain crosses the membrane as a helical span at residues 20 to 43; it reads PVTIPAVMFIFGVVGNLVAIVVLC. The Cytoplasmic segment spans residues 44 to 55; that stretch reads KSRKEQKETTFY. Residues 56-79 form a helical membrane-spanning segment; the sequence is TLVCGLAVTDLLGTLLVSPVTIAT. Over 80–96 the chain is Extracellular; that stretch reads YMKGQWPGGQALCDYST. A disulfide bridge connects residues C92 and C170. The helical transmembrane segment at 97–115 threads the bilayer; the sequence is FILLFFGLSGLSIICAMSI. Over 116-135 the chain is Cytoplasmic; sequence ERYLAINHAYFYSHYVDKRL. Residues 136 to 160 traverse the membrane as a helical segment; sequence AGLTLFAVYASNVLFCALPNMGLGR. Over 161-184 the chain is Extracellular; it reads SRLQFPDTWCFIDWRTNVTAHAAF. The N-linked (GlcNAc...) asparagine glycan is linked to N177. A helical transmembrane segment spans residues 185 to 211; it reads SYMYAGFSSFLILATVLCNVLVCGALL. At 212–270 the chain is on the cytoplasmic side; it reads RMHRQFMRRTSLGTEQHHAAAAAAVTSAACRGHPTASPALPRLSDFRRRRSFRRIAGAE. A helical transmembrane segment spans residues 271–298; the sequence is IQMVILLIATSLVVLICSIPLVVRVFIN. At 299 to 315 the chain is on the extracellular side; sequence QLYQPDLVREISQNPDL. The helical transmembrane segment at 316-335 threads the bilayer; the sequence is QAIRIASVNPILDPWIYILL. The Cytoplasmic segment spans residues 336–488; it reads RKTVLSKAIE…ETLNLSEKCI (153 aa). A compositionally biased stretch (basic and acidic residues) spans 358 to 371; the sequence is RRDRSGQHCSDSRR. The interval 358 to 381 is disordered; sequence RRDRSGQHCSDSRRTSSAMSTHSR. Positions 372–381 are enriched in polar residues; it reads TSSAMSTHSR. A phosphoserine mark is found at S377, S380, S382, and S385. Residues 456–475 form a disordered region; it reads EVGGGGRAGPTPKGSSLQVT.

Belongs to the G-protein coupled receptor 1 family. As to quaternary structure, interacts with FEM1A. Post-translationally, phosphorylation mediates agonist-mediated desensitization by promoting cytoplasmic retention. In terms of tissue distribution, highly expressed in intestine, duodenal epithelium, uterus, thymus and adrenal cortex. Lower but significant expression in whole adrenal, lung, spleen, stomach, and kidney. In this latter organ, the receptor is localized in the glomeruli and the transitional epithelium of the renal calyx.

Its subcellular location is the cell membrane. Functionally, receptor for prostaglandin E2 (PGE2). The activity of this receptor is mediated by G(s) proteins that stimulate adenylate cyclase. Has a relaxing effect on smooth muscle. May play an important role in regulating renal hemodynamics, intestinal epithelial transport, adrenal aldosterone secretion, and uterine function. The polypeptide is Prostaglandin E2 receptor EP4 subtype (PTGER4) (Oryctolagus cuniculus (Rabbit)).